Consider the following 241-residue polypeptide: Sugar fermentation stimulation protein homolog (241 aa).

It belongs to the SfsA family.

In Hahella chejuensis (strain KCTC 2396), this protein is Sugar fermentation stimulation protein homolog.